A 197-amino-acid chain; its full sequence is Nucleoid occlusion factor SlmA (197 aa).

One can recognise an HTH tetR-type domain in the interval 6–66 (NDRRTQILQA…GLIEFIEESL (61 aa)). Positions 29-48 (TTAALAKQVGVSEAALYRHF) form a DNA-binding region, H-T-H motif.

This sequence belongs to the nucleoid occlusion factor SlmA family. Homodimer. Interacts with FtsZ.

It localises to the cytoplasm. The protein localises to the nucleoid. Its function is as follows. Required for nucleoid occlusion (NO) phenomenon, which prevents Z-ring formation and cell division over the nucleoid. Acts as a DNA-associated cell division inhibitor that binds simultaneously chromosomal DNA and FtsZ, and disrupts the assembly of FtsZ polymers. SlmA-DNA-binding sequences (SBS) are dispersed on non-Ter regions of the chromosome, preventing FtsZ polymerization at these regions. This Marinomonas sp. (strain MWYL1) protein is Nucleoid occlusion factor SlmA.